The following is a 117-amino-acid chain: Small ribosomal subunit protein bS16 (117 aa).

Basic residues predominate over residues 81 to 90 (LKKRPNRNNP). Residues 81–117 (LKKRPNRNNPHKGQPGKKAQERISAAKQVAEAESAPV) are disordered.

This sequence belongs to the bacterial ribosomal protein bS16 family.

The chain is Small ribosomal subunit protein bS16 from Bartonella quintana (strain Toulouse) (Rochalimaea quintana).